Consider the following 449-residue polypeptide: Galactosyl transferase CpsE (449 aa).

5 helical membrane passes run 5–22, 27–46, 59–78, 88–107, and 258–280; these read VVVY…TPNF, DLLF…DFYR, MVLK…FFIF, SFFT…NSFL, and FLDI…FLVP.

Belongs to the bacterial sugar transferase family.

The protein localises to the cell membrane. Galactosyl transferase is essential for the assembly of the group B streptococci (GBS) type III capsular polysaccharide. May be involved in the formation of either or both galactosidic bonds by catalyzing the addition of galactose to an oligosaccharide precursor or to a lipid intermediate. Type III capsular polysaccharide consists of a linear backbone with short side chains ending in residues of N-acetylneuraminic acid or sialic acid. The presence of sialic acid on the surface of the organism inhibits activation of the alternative pathway of complement and is thought to be an important element in the virulence function of the capsule. The protein is Galactosyl transferase CpsE (cpsE) of Streptococcus agalactiae serotype III (strain NEM316).